We begin with the raw amino-acid sequence, 382 residues long: Tuliposide A-converting enzyme 2, chloroplastic (382 aa).

Residues 1-74 (MSVASFFSSL…PSPSLSPTPT (74 aa)) constitute a chloroplast transit peptide. Ser232 functions as the Acyl-ester intermediate in the catalytic mechanism. Catalysis depends on charge relay system residues Asp324 and His356.

This sequence belongs to the AB hydrolase superfamily. Homodimer. Expressed in roots, stems, leaves, petals, stamens and pistils, but not in bulb scales.

The protein resides in the plastid. Its subcellular location is the chloroplast. The catalysed reaction is 6-tuliposide A = tulipalin A + D-glucose. With respect to regulation, inhibited by NaF, AgNO(3), HgCl(2), CuSO(4) and phenylmethylsulfonyl fluoride (PMSF). Its function is as follows. Lactone-forming carboxylesterases, specifically catalyzing intramolecular transesterification, but not hydrolysis. Involved in the biosynthesis of tulipalins, defensive chemicals that show antimicrobial activities against a broad range of strains of bacteria and fungi. Substrates are 6-tuliposide A &gt; 6-tuliposide B. This is Tuliposide A-converting enzyme 2, chloroplastic (TCEA2) from Tulipa gesneriana (Garden tulip).